A 166-amino-acid polypeptide reads, in one-letter code: Testis-expressed protein 51 (166 aa).

An N-terminal signal peptide occupies residues 1-15; sequence MLPLLIICLLPAIEG. Residues 138–154 traverse the membrane as a helical segment; the sequence is SLWAVSLSSALLLAIAG.

The protein localises to the membrane. The sequence is that of Testis-expressed protein 51 from Homo sapiens (Human).